Here is a 370-residue protein sequence, read N- to C-terminus: Peptidyl-prolyl cis-trans isomerase D (370 aa).

Serine 5 carries the post-translational modification Phosphoserine. The PPIase cyclophilin-type domain occupies 19-183 (FFDVDIGGER…KLCVIAECGE (165 aa)). Residue lysine 171 is modified to N6-acetyllysine. Residues 185-215 (KEGDDWGIFPKDGSGDSHPDFPEDADIDLKD) form a chaperone activity region. Serine 198 bears the Phosphoserine mark. The interval 214 to 370 (KDVDKILLIS…EKAVYAKMFA (157 aa)) is interaction with HSP90AB1. TPR repeat units follow at residues 223-256 (SEDLKNIGNTFFKSQNWEMAIKKYAKVLRYVDSS), 273-306 (LSCVLNIGACKLKMSNWQGAIDSCLEALEMDPSN), and 307-340 (TKALYRKAQGWQGLKEYDQALADLKKAQEIAPGD).

It belongs to the cyclophilin-type PPIase family. PPIase D subfamily. In terms of assembly, identified in ESR1 or NR3C1/GCR steroid receptor-chaperone complexes. Found in HSP90 chaperone complexes with kinase clients LCK or EIF2AK1. Two monomers associate with one HSP90 homodimer. Interacts with HSP90AA1. Interacts with HSP90AB1; PPID and FKBP4 compete for binding to HSP90AB1 and the interaction is mutually exclusive with the PPID:HSPA8 interaction. Interacts with HSPA8; PPID and STIP1 but not FKBP4 compete for binding to HSPA8 and the interaction is mutually exclusive with the PPID:HSP90AB1 interaction. Interacts with S100A1 and S100A2; the interactions dissociate the PPID:HSP90AA1 interaction. Interacts with S100A6. Interacts with MYB, ILF2, XRCC6, RACK1 and RPS3. Interacts with cytoplasmic dynein 1 intermediate chain (DYNC1I1 or DYNC1I2).

The protein localises to the cytoplasm. It localises to the nucleus. Its subcellular location is the nucleolus. It is found in the nucleoplasm. It carries out the reaction [protein]-peptidylproline (omega=180) = [protein]-peptidylproline (omega=0). Less sensitive to inhibition by cyclosporin A than is CYP-18. Functionally, PPIase that catalyzes the cis-trans isomerization of proline imidic peptide bonds in oligopeptides and may therefore assist protein folding. Proposed to act as a co-chaperone in HSP90 complexes such as in unligated steroid receptors heterocomplexes. Different co-chaperones seem to compete for association with HSP90 thus establishing distinct HSP90-co-chaperone-receptor complexes with the potential to exert tissue-specific receptor activity control. May have a preference for estrogen receptor complexes and is not found in glucocorticoid receptor complexes. May be involved in cytoplasmic dynein-dependent movement of the receptor from the cytoplasm to the nucleus. May regulate MYB by inhibiting its DNA-binding activity. Involved in regulation of AHR signaling by promoting the formation of the AHR:ARNT dimer; the function is independent of HSP90 but requires the chaperone activity region. Involved in regulation of UV radiation-induced apoptosis. This chain is Peptidyl-prolyl cis-trans isomerase D, found in Mus musculus (Mouse).